A 297-amino-acid polypeptide reads, in one-letter code: Acetylglutamate kinase (297 aa).

Substrate-binding positions include 70 to 71 (GG), Arg-92, and Asn-194.

It belongs to the acetylglutamate kinase family. ArgB subfamily.

Its subcellular location is the cytoplasm. The enzyme catalyses N-acetyl-L-glutamate + ATP = N-acetyl-L-glutamyl 5-phosphate + ADP. Its pathway is amino-acid biosynthesis; L-arginine biosynthesis; N(2)-acetyl-L-ornithine from L-glutamate: step 2/4. Its function is as follows. Catalyzes the ATP-dependent phosphorylation of N-acetyl-L-glutamate. This chain is Acetylglutamate kinase, found in Janthinobacterium sp. (strain Marseille) (Minibacterium massiliensis).